We begin with the raw amino-acid sequence, 429 residues long: Enolase (429 aa).

Glutamine 163 lines the (2R)-2-phosphoglycerate pocket. Glutamate 205 functions as the Proton donor in the catalytic mechanism. Mg(2+)-binding residues include aspartate 242, glutamate 287, and aspartate 314. Positions 339, 368, 369, and 390 each coordinate (2R)-2-phosphoglycerate. Lysine 339 serves as the catalytic Proton acceptor.

This sequence belongs to the enolase family. It depends on Mg(2+) as a cofactor.

It is found in the cytoplasm. It localises to the secreted. The protein localises to the cell surface. It carries out the reaction (2R)-2-phosphoglycerate = phosphoenolpyruvate + H2O. Its pathway is carbohydrate degradation; glycolysis; pyruvate from D-glyceraldehyde 3-phosphate: step 4/5. Catalyzes the reversible conversion of 2-phosphoglycerate (2-PG) into phosphoenolpyruvate (PEP). It is essential for the degradation of carbohydrates via glycolysis. The chain is Enolase from Cupriavidus pinatubonensis (strain JMP 134 / LMG 1197) (Cupriavidus necator (strain JMP 134)).